A 209-amino-acid polypeptide reads, in one-letter code: MIKTNDFMEIMKGRRSIRNYDPAVKISKEEMTEILEEATTAPSSVNAQPWRFLVIDSPEGKEKLAPLASFNQTQVTTSSAVIAVFADMNNADYLEEIYSKAVELGYMPQEVKDRQIAALTAHFEKLPAQVNRETILIDGGLVSMQLMLTARAHGYDTNPIGGYDKENIAETFGLDKERYVPVMLLSIGKAADEGYASYRLPIDTIAEWK.

Residues R14–S16, Q72–Q74, G161–G162, and R199 each bind FMN.

The protein belongs to the nitroreductase family. Requires FMN as cofactor.

This Bacillus subtilis (strain 168) protein is Putative NAD(P)H nitroreductase YdgI (ydgI).